The primary structure comprises 117 residues: Fluoride-specific ion channel FluC 2 (117 aa).

Helical transmembrane passes span 1 to 21, 33 to 53, 60 to 80, and 95 to 115; these read MISI…RSAI, LPIA…LTIG, WFPA…STLA, and LFLN…YIGY. Glycine 71 and threonine 74 together coordinate Na(+).

Belongs to the fluoride channel Fluc/FEX (TC 1.A.43) family.

It localises to the cell membrane. The enzyme catalyses fluoride(in) = fluoride(out). With respect to regulation, na(+) is not transported, but it plays an essential structural role and its presence is essential for fluoride channel function. Functionally, fluoride-specific ion channel. Important for reducing fluoride concentration in the cell, thus reducing its toxicity. This chain is Fluoride-specific ion channel FluC 2, found in Staphylococcus aureus (strain COL).